We begin with the raw amino-acid sequence, 195 residues long: Nucleoid occlusion factor SlmA (195 aa).

Residues 7–67 (TNRRAQILQA…GLIEFIEETL (61 aa)) enclose the HTH tetR-type domain. Positions 30 to 49 (TTAKLAEKVGVSEAALYRHF) form a DNA-binding region, H-T-H motif. The stretch at 109-141 (DALMGEQDRLRARIAKLFERLETQLKQVLRERK) forms a coiled coil.

The protein belongs to the nucleoid occlusion factor SlmA family. Homodimer. Interacts with FtsZ.

The protein resides in the cytoplasm. It localises to the nucleoid. Required for nucleoid occlusion (NO) phenomenon, which prevents Z-ring formation and cell division over the nucleoid. Acts as a DNA-associated cell division inhibitor that binds simultaneously chromosomal DNA and FtsZ, and disrupts the assembly of FtsZ polymers. SlmA-DNA-binding sequences (SBS) are dispersed on non-Ter regions of the chromosome, preventing FtsZ polymerization at these regions. The polypeptide is Nucleoid occlusion factor SlmA (Alteromonas mediterranea (strain DSM 17117 / CIP 110805 / LMG 28347 / Deep ecotype)).